Here is a 144-residue protein sequence, read N- to C-terminus: MSARTKARKRALDLLFSADVRQISLAHALAVEAERAANEPAREASWLYAREIVDGVIDNQEEIDEQIETYAQGWTLARMPAVDRAILRIGVWELLFNDQVPDGVAISEAVEAATVLSTDDSAGFVNGLLAKIAQNKPRDGEVDR.

This sequence belongs to the NusB family.

Functionally, involved in transcription antitermination. Required for transcription of ribosomal RNA (rRNA) genes. Binds specifically to the boxA antiterminator sequence of the ribosomal RNA (rrn) operons. This is Transcription antitermination protein NusB from Leifsonia xyli subsp. xyli (strain CTCB07).